The sequence spans 291 residues: Geranyl diphosphate 2-C-methyltransferase (291 aa).

The protein belongs to the geranyl diphosphate 2-C-methyltransferase family. Mg(2+) serves as cofactor.

The catalysed reaction is (2E)-geranyl diphosphate + S-adenosyl-L-methionine = (E)-2-methylgeranyl diphosphate + S-adenosyl-L-homocysteine + H(+). Catalyzes the SAM-dependent methylation of geranyl diphosphate (GPP) to yield (E)-2-methylgeranyl diphosphate (2-MeGPP). In Streptomyces ambofaciens (strain ATCC 23877 / 3486 / DSM 40053 / JCM 4204 / NBRC 12836 / NRRL B-2516), this protein is Geranyl diphosphate 2-C-methyltransferase.